The primary structure comprises 113 residues: Putative membrane protein insertion efficiency factor (113 aa).

Belongs to the UPF0161 family.

The protein resides in the cell inner membrane. Functionally, could be involved in insertion of integral membrane proteins into the membrane. This Campylobacter jejuni subsp. jejuni serotype O:2 (strain ATCC 700819 / NCTC 11168) protein is Putative membrane protein insertion efficiency factor.